A 1849-amino-acid polypeptide reads, in one-letter code: MDHTASQNAQDLIGIPHLGVSGSSTKWHSELSPTEGPHSAGSSTPGFLSPMAELSHPSPPPPALGSLLQLPDGSPSWSMLEVASGPASTQQIKAGVPGRVHNGVSLPTFKNTETATHEAEPPLFQTAESGAIEMTSRKLASATANDSANPLHLSAAPENSRGPALSAEHTSSLVPSLHITTLGQEQAILSGAVPASPSTGTADFPSILTFLQPTENHASPSPVPEMPTLPAEGSDGSPPATRDLLLSSKVPNLLSTSWTFPRWKKDSVTAILGKNEEANVTIPLQAFPRKEVLSLHTVNGFVSDFSTGSVSSPIITAPRTNPLPSGPPLPSILSIQATQTVFPSLGFSSTKPEAYAAAVDHSGLPASASKQVRASPSSMDVYDSLTIGDMKKPATTDVFWSSLSAETGSLSTESIISGLQQQTNYDLNGHTISTTSWETHLAPTAPPNGLTSAADAIKSQDFKDTAGHSVTAEGFSIQDLVLGTSIEQPVQQSDMTMVGSHIDLWPTSNNNHSRDFQTAEVAYYSPTTRHSVSHPQLQLPNQPAHPLLLTSPGPTSTGSLQEMLSDGTDTGSEISSDINSSPERNASTPFQNILGYHSAAESSISTSVFPRTSSRVLRASQHPKKWTADTVSSKVQPTAAAAVTLFLRKSSPPALSAALVAKGTSSSPLAVASGPAKSSSMTTLAKNVTNKAASGPKRTPGAVHTAFPFTPTYMYARTGHTTSTHTAMQGNMDTASGLLSTTYLPRKPQAMHTGLPNPTNLEMPRASTPRPLTVTAALTSITASVKATRLPPLRAENTDAVLPAASAAVVTTGKMASNLECQMSSKLLVKTVLFLTQRRVQISESLKFSIAKGLTQALRKAFHQNDVSAHVDILEYSHNVTVGYYATKGKLVYLPAVVIEMLGVYGVSNVTADLKQHTPHLQSVAVLASPWNPQPAGYFQLKTVLQFVSQADNIQSCKFAQTMEQRLQKAFQDAERKVLNTKSNLTIQIVSTSNASQAVTLVYVVGNQSTFLNGTVASSLLSQLSAELVGFYLTYPPLTIAEPLEYPNLDISETTRDYWVITVLQGVDNSLVGLHNQSFARVMEQRLAQLFMMSQQQGRRFKRATTLGSYTVQMVKMQRVPGPKDPAELTYYTLYNGKPLLGTAAAKILSTIDSQRMALTLHHVVLLQADPVVKNPPNNLWIIAAVLAPIAVVTVIIIIITAVLCRKNKNDFKPDTMINLPQRAKPVQGFDYAKQHLGQQGADEEVIPVTQETVVLPLPIRDAPQERDVAQDGSTIKTAKSTETRKSRSPSENGSVISNESGKPSSGRRSPQNVMAQQKVTKEEARKRNVPASDEEEGAVLFDNSSKVAAEPFDTSSGSVQLIAIKPTALPMVPPTSDRSQESSAVLNGEVNKALKQKSDIEHYRNKLRLKAKRKGYYDFPAVETSKGLTERKKMYEKAPKEMEHVLDPDSELCAPFTESKNRQQMKNSVYRSRQSLNSPSPGETEMDLLVTRERPRRGIRNSGYDTEPEIIEETNIDRVPEPRGYSRSRQVKGHSETSTLSSQPSIDEVRQQMHMLLEEAFSLASAGHAGQSRHQEAYGSAQHLPYSEVVTSAPGTMTRPRAGVQWVPTYRPEMYQYSLPRPAYRFSQLPEMVMGSPPPPVPPRTGPVAVASLRRSTSDIGSKTRMAESTGPEPAQLHDSASFTQMSRGPVSVTQLDQSALNYSGNTVPAVFAIPAANRPGFTGYFIPTPPSSYRNQAWMSYAGENELPSQWADSVPLPGYIEAYPRSRYPQSSPSRLPRQYSQPANLHPSLEQAPAPSTAASQQSLAENDPSDAPLTNISTAALVKAIREEVAKLAKKQTDMFEFQV.

Polar residues predominate over residues 1-10 (MDHTASQNAQ). Disordered stretches follow at residues 1-70 (MDHT…LLQL), 142-166 (ATANDSANPLHLSAAPENSRGPALS), 213-242 (PTENHASPSPVPEMPTLPAEGSDGSPPATR), and 529-586 (RHSV…ERNA). 2 stretches are compositionally biased toward polar residues: residues 529-541 (RHSVSHPQLQLPN) and 552-586 (PGPTSTGSLQEMLSDGTDTGSEISSDINSSPERNA). Positions 958–986 (KFAQTMEQRLQKAFQDAERKVLNTKSNLT) form a coiled coil. The helical transmembrane segment at 1180-1200 (LWIIAAVLAPIAVVTVIIIII) threads the bilayer. 4 disordered regions span residues 1258–1338 (LPIR…EEEG), 1460–1546 (SKNR…SQPS), 1656–1679 (RSTSDIGSKTRMAESTGPEPAQLH), and 1769–1819 (SRYP…APLT). Polar residues-rich tracts occupy residues 1290–1319 (PSENGSVISNESGKPSSGRRSPQNVMAQQK), 1463–1482 (RQQMKNSVYRSRQSLNSPSP), and 1537–1546 (ETSTLSSQPS). 2 stretches are compositionally biased toward low complexity: residues 1769–1786 (SRYPQSSPSRLPRQYSQP) and 1795–1809 (QAPAPSTAASQQSLA).

This sequence belongs to the UPF0606 family.

It is found in the membrane. The sequence is that of UPF0606 protein KIAA1549L (KIAA1549L) from Homo sapiens (Human).